We begin with the raw amino-acid sequence, 183 residues long: Inner membrane protein YgjV (183 aa).

Residues 1–2 (MT) are Periplasmic-facing. The helical transmembrane segment at 3-23 (AYWLAQGVGVIAFLIGITTFF) threads the bilayer. Topologically, residues 24–38 (NRDERRFKKQLSVYS) are cytoplasmic. Residues 39 to 59 (AVIGVHFFLLGTYPAGASAIL) form a helical membrane-spanning segment. Over 60 to 71 (NAIRTLITLRTR) the chain is Periplasmic. The next 2 helical transmembrane spans lie at 72-92 (SLWV…AKFH) and 93-113 (HPVE…LFCC). Residues 114-133 (KGLTMRCVMWFSTCCWVIHN) lie on the Periplasmic side of the membrane. A helical transmembrane segment spans residues 134-154 (FWAGSIGGTMIEGSFLLMNGL). At 155-183 (NIIRFWRMQKRGIDPFKVEKTPSAVDERG) the chain is on the cytoplasmic side.

It localises to the cell inner membrane. The protein is Inner membrane protein YgjV (ygjV) of Escherichia coli (strain K12).